Reading from the N-terminus, the 517-residue chain is AAA ATPase forming ring-shaped complexes (517 aa).

A coiled-coil region spans residues 25 to 53 (ARNAKLVELLQASRTKLEEINGRLEALAE). 233 to 238 (GNGKTL) provides a ligand contact to ATP.

This sequence belongs to the AAA ATPase family. As to quaternary structure, homohexamer. Assembles into a hexameric ring structure.

In Corynebacterium jeikeium (strain K411), this protein is AAA ATPase forming ring-shaped complexes.